The sequence spans 198 residues: TM2 domain-containing protein 2 (198 aa).

A signal peptide spans 1 to 27; that stretch reads MRWPVPPVGYLLLGGQGLLLTFSLISS. At 28–128 the chain is on the extracellular side; it reads QNQTSPVTYP…FLRGNKPCIK (101 aa). N29, N40, and N76 each carry an N-linked (GlcNAc...) asparagine glycan. A helical membrane pass occupies residues 129–149; it reads YTGHYFITTLLYSFFLGCFGV. The TM2 domain occupies 131–179; the sequence is GHYFITTLLYSFFLGCFGVDRFCLGHTGTAVGKLLTLGGLGIWWFVDLI. Topologically, residues 150-166 are cytoplasmic; the sequence is DRFCLGHTGTAVGKLLT. Residues 167-187 traverse the membrane as a helical segment; that stretch reads LGGLGIWWFVDLILLITGGLM. Residues 188–198 lie on the Extracellular side of the membrane; it reads PSDNSNWCTIY.

The protein belongs to the TM2 family.

Its subcellular location is the membrane. This is TM2 domain-containing protein 2 (tm2d2) from Xenopus tropicalis (Western clawed frog).